A 452-amino-acid chain; its full sequence is tRNA modification GTPase MnmE (452 aa).

(6S)-5-formyl-5,6,7,8-tetrahydrofolate contacts are provided by Arg-21, Glu-78, and Lys-118. One can recognise a TrmE-type G domain in the interval 214–375 (GMKVVIAGRP…LREHLKKSMG (162 aa)). Asn-224 is a binding site for K(+). GTP contacts are provided by residues 224–229 (NAGKSS), 243–249 (TNIAGTT), and 268–271 (DTAG). Position 228 (Ser-228) interacts with Mg(2+). Positions 243, 245, and 248 each coordinate K(+). Thr-249 lines the Mg(2+) pocket. Residue Lys-452 coordinates (6S)-5-formyl-5,6,7,8-tetrahydrofolate.

It belongs to the TRAFAC class TrmE-Era-EngA-EngB-Septin-like GTPase superfamily. TrmE GTPase family. In terms of assembly, homodimer. Heterotetramer of two MnmE and two MnmG subunits. It depends on K(+) as a cofactor.

The protein resides in the cytoplasm. Exhibits a very high intrinsic GTPase hydrolysis rate. Involved in the addition of a carboxymethylaminomethyl (cmnm) group at the wobble position (U34) of certain tRNAs, forming tRNA-cmnm(5)s(2)U34. This chain is tRNA modification GTPase MnmE, found in Actinobacillus pleuropneumoniae serotype 3 (strain JL03).